The primary structure comprises 135 residues: Transcription antitermination protein NusB (135 aa).

Residues 115 to 135 (ATPAESTGRGSAVDSIPGQPS) are disordered.

Belongs to the NusB family.

In terms of biological role, involved in transcription antitermination. Required for transcription of ribosomal RNA (rRNA) genes. Binds specifically to the boxA antiterminator sequence of the ribosomal RNA (rrn) operons. The sequence is that of Transcription antitermination protein NusB from Frankia casuarinae (strain DSM 45818 / CECT 9043 / HFP020203 / CcI3).